The chain runs to 316 residues: Ribosomal RNA small subunit methyltransferase H (316 aa).

S-adenosyl-L-methionine is bound by residues 35 to 37 (SGH), D55, F84, D105, and Q112.

It belongs to the methyltransferase superfamily. RsmH family.

It is found in the cytoplasm. The enzyme catalyses cytidine(1402) in 16S rRNA + S-adenosyl-L-methionine = N(4)-methylcytidine(1402) in 16S rRNA + S-adenosyl-L-homocysteine + H(+). Functionally, specifically methylates the N4 position of cytidine in position 1402 (C1402) of 16S rRNA. The sequence is that of Ribosomal RNA small subunit methyltransferase H from Streptococcus dysgalactiae subsp. equisimilis (strain GGS_124).